Consider the following 310-residue polypeptide: Olfactory receptor 5T7 (310 aa).

The Extracellular segment spans residues 1–23 (MENITEVTEFILMGFTDNADLEI). Asn-3 is a glycosylation site (N-linked (GlcNAc...) asparagine). A helical membrane pass occupies residues 24 to 44 (LSFFLFLAIYLFTLMGNLGLI). Residues 45–52 (TLVIGDSR) lie on the Cytoplasmic side of the membrane. The helical transmembrane segment at 53–73 (LHNPMYYFLSVLSSVDACYST) threads the bilayer. Residues 74–97 (VITPQMVVDFVSEKKVISFIGCAT) lie on the Extracellular side of the membrane. Cys-95 and Cys-187 are joined by a disulfide. A helical transmembrane segment spans residues 98-118 (QMFLAVTFGTTECFLLAAMAY). At 119–131 (DRYVAIHNPLMYV) the chain is on the cytoplasmic side. Residues 132 to 152 (VSMSPRVYVPLIIASYAGGIL) traverse the membrane as a helical segment. The Extracellular segment spans residues 153 to 194 (HAVIHTVATFRLSFCGSNKISHIFCDIPPLLAISCSDTHFNQ). Residues 195-215 (LLLFYCAGFIEVVTILIVLLS) form a helical membrane-spanning segment. Residues 216–235 (YGFILSVILKTRSTEGKRKV) are Cytoplasmic-facing. A helical membrane pass occupies residues 236–256 (FSTCGSHLMAVSTFHGTVLFM). The Extracellular segment spans residues 257–269 (YVRPSDSYALEHD). The chain crosses the membrane as a helical span at residues 270-290 (MMVSIFYSIVIPMLNPLIYSL). The Cytoplasmic portion of the chain corresponds to 291–310 (RNKDVKEAIKKVFGKRILCG).

This sequence belongs to the G-protein coupled receptor 1 family.

It localises to the cell membrane. Its function is as follows. Potential odorant receptor. This Mus musculus (Mouse) protein is Olfactory receptor 5T7.